A 210-amino-acid polypeptide reads, in one-letter code: 7-carboxy-7-deazaguanine synthase (210 aa).

Residues 12–14 (LQG) and Arg27 contribute to the substrate site. The region spanning 18–210 (QAGKAAVFCR…VQTHKYLGLP (193 aa)) is the Radical SAM core domain. Cys31, Cys46, and Cys49 together coordinate [4Fe-4S] cluster. Mg(2+) is bound at residue Thr51. Residue Thr90 coordinates substrate. S-adenosyl-L-methionine contacts are provided by residues Gly92, 133 to 135 (SPK), and 173 to 176 (QPMD). Pro210 is a substrate binding site.

Belongs to the radical SAM superfamily. 7-carboxy-7-deazaguanine synthase family. Homodimer. [4Fe-4S] cluster serves as cofactor. S-adenosyl-L-methionine is required as a cofactor. It depends on Mg(2+) as a cofactor.

It carries out the reaction 6-carboxy-5,6,7,8-tetrahydropterin + H(+) = 7-carboxy-7-deazaguanine + NH4(+). It participates in purine metabolism; 7-cyano-7-deazaguanine biosynthesis. Its function is as follows. Catalyzes the complex heterocyclic radical-mediated conversion of 6-carboxy-5,6,7,8-tetrahydropterin (CPH4) to 7-carboxy-7-deazaguanine (CDG), a step common to the biosynthetic pathways of all 7-deazapurine-containing compounds. This is 7-carboxy-7-deazaguanine synthase from Caulobacter vibrioides (strain ATCC 19089 / CIP 103742 / CB 15) (Caulobacter crescentus).